Here is a 330-residue protein sequence, read N- to C-terminus: G-protein coupled receptor 157 (330 aa).

Topologically, residues 1–15 (MPSPAPPTELLPWER) are extracellular. A helical membrane pass occupies residues 16–36 (AVVLLSCALSALGSGLLVATH). The Cytoplasmic portion of the chain corresponds to 37–48 (ALWPDLRSRARR). A helical membrane pass occupies residues 49–69 (LLLFLSLADLLSAASYFYGVL). Residues 70 to 87 (QDFAGTSWDCVLQGALST) are Extracellular-facing. Residues 88–108 (FANTSSFFWTVAIALYLYLSI) form a helical membrane-spanning segment. Residues 109–119 (VRTTRGPSTDH) lie on the Cytoplasmic side of the membrane. The chain crosses the membrane as a helical span at residues 120–140 (LIWAFHLISWGVPLAITVAAV). Residues 141-166 (SLKKIGYDASDVSVGWCWINLEAEDR) lie on the Extracellular side of the membrane. The chain crosses the membrane as a helical span at residues 167–187 (VLWMLLTGKLWEMLAYILLPL). Topologically, residues 188–227 (LYLLVRKHINRAHQALSEYRPICEGRQLQRGSSTSTADKK) are cytoplasmic. A helical transmembrane segment spans residues 228-248 (LVLIPLIFICLRVWSTVRFVL). At 249 to 259 (TLCGSPAVQTP) the chain is on the extracellular side. A helical membrane pass occupies residues 260-280 (VLVVLHGIGNTFQGGANCIMF). At 281 to 330 (VLCTRAVRTRLFSLCCCCPRPSTQSPPGAPTPPKIGESQESRRTPEVPST) the chain is on the cytoplasmic side. A disordered region spans residues 301–330 (PSTQSPPGAPTPPKIGESQESRRTPEVPST). A compositionally biased stretch (basic and acidic residues) spans 317–330 (ESQESRRTPEVPST).

It belongs to the G-protein coupled receptor 2 family. Expressed in the primary cilia of radial glial progenitors (RGPs) in the developing neocortex.

The protein localises to the cell projection. Its subcellular location is the cilium membrane. Its function is as follows. Orphan receptor that promotes neuronal differentiation of radial glial progenitors (RGPs). The activity of this receptor is mediated by a G(q)-protein that activates a phosphatidylinositol-calcium second messenger. This is G-protein coupled receptor 157 (Gpr157) from Mus musculus (Mouse).